We begin with the raw amino-acid sequence, 204 residues long: Tat proofreading chaperone DmsD (204 aa).

This sequence belongs to the TorD/DmsD family. DmsD subfamily.

Functionally, required for biogenesis/assembly of DMSO reductase, but not for the interaction of the DmsA signal peptide with the Tat system. May be part of a chaperone cascade complex that facilitates a folding-maturation pathway for the substrate protein. The chain is Tat proofreading chaperone DmsD from Escherichia coli O6:H1 (strain CFT073 / ATCC 700928 / UPEC).